Reading from the N-terminus, the 270-residue chain is Alpha N-terminal protein methyltransferase 1 (270 aa).

Residues Gly114, Arg119, 137–139 (EQN), 165–166 (LQ), and Gln180 contribute to the S-adenosyl-L-methionine site.

Belongs to the methyltransferase superfamily. NTM1 family.

It carries out the reaction N-terminal L-alanyl-L-prolyl-L-lysyl-[protein] + 3 S-adenosyl-L-methionine = N-terminal N,N,N-trimethyl-L-alanyl-L-prolyl-L-lysyl-[protein] + 3 S-adenosyl-L-homocysteine + 3 H(+). The enzyme catalyses N-terminal L-seryl-L-prolyl-L-lysyl-[protein] + 3 S-adenosyl-L-methionine = N-terminal N,N,N-trimethyl-L-seryl-L-prolyl-L-lysyl-[protein] + 3 S-adenosyl-L-homocysteine + 3 H(+). It catalyses the reaction N-terminal L-prolyl-L-prolyl-L-lysyl-[protein] + 2 S-adenosyl-L-methionine = N-terminal N,N-dimethyl-L-prolyl-L-prolyl-L-lysyl-[protein] + 2 S-adenosyl-L-homocysteine + 2 H(+). In terms of biological role, alpha-N-methyltransferase that methylates the N-terminus of target proteins containing the N-terminal motif [Ala/Pro/Ser]-Pro-Lys when the initiator Met is cleaved. Specifically catalyzes mono-, di- or tri-methylation of exposed alpha-amino group of Ala or Ser residue in the [Ala/Ser]-Pro-Lys motif and mono- or di-methylation of Pro in the Pro-Pro-Lys motif. This chain is Alpha N-terminal protein methyltransferase 1, found in Dictyostelium discoideum (Social amoeba).